An 871-amino-acid polypeptide reads, in one-letter code: Pentatricopeptide repeat-containing protein At3g06920 (871 aa).

PPR repeat units follow at residues 97–131 (CPESYNSLLLVMARCRNFDALDQILGEMSVAGFGP), 132–166 (SVNTCIEMVLGCVKANKLREGYDVVQMMRKFKFRP), 167–201 (AFSAYTTLIGAFSAVNHSDMMLTLFQQMQELGYEP), 202–236 (TVHLFTTLIRGFAKEGRVDSALSLLDEMKSSSLDA), 237–271 (DIVLYNVCIDSFGKVGKVDMAWKFFHEIEANGLKP), 272–306 (DEVTYTSMIGVLCKANRLDEAVEMFEHLEKNRRVP), 307–341 (CTYAYNTMIMGYGSAGKFDEAYSLLERQRAKGSIP), 342–372 (SVIAYNCILTCLRKMGKVDEALKVFEEMKKD), 376–410 (NLSTYNILIDMLCRAGKLDTAFELRDSMQKAGLFP), 411–445 (NVRTVNIMVDRLCKSQKLDEACAMFEEMDYKVCTP), 446–480 (DEITFCSLIDGLGKVGRVDDAYKVYEKMLDSDCRT), 481–515 (NSIVYTSLIKNFFNHGRKEDGHKIYKDMINQNCSP), 516–550 (DLQLLNTYMDCMFKAGEPEKGRAMFEEIKARRFVP), 551–585 (DARSYSILIHGLIKAGFANETYELFYSMKEQGCVL), 586–620 (DTRAYNIVIDGFCKCGKVNKAYQLLEEMKTKGFEP), 621–655 (TVVTYGSVIDGLAKIDRLDEAYMLFEEAKSKRIEL), 656–690 (NVVIYSSLIDGFGKVGRIDEAYLILEELMQKGLTP), 691–725 (NLYTWNSLLDALVKAEEINEALVCFQSMKELKCTP), 726–760 (NQVTYGILINGLCKVRKFNKAFVFWQEMQKQGMKP), 761–795 (STISYTTMISGLAKAGNIAEAGALFDRFKANGGVP), and 796–830 (DSACYNAMIEGLSNGNRAMDAFSLFEETRRRGLPI).

The protein belongs to the PPR family. P subfamily.

This is Pentatricopeptide repeat-containing protein At3g06920 from Arabidopsis thaliana (Mouse-ear cress).